The chain runs to 98 residues: NADH-ubiquinone oxidoreductase chain 4L (98 aa).

The next 3 membrane-spanning stretches (helical) occupy residues Met1–Ile21, Ser29–Leu49, and Ile61–Val81.

It belongs to the complex I subunit 4L family. Core subunit of respiratory chain NADH dehydrogenase (Complex I) which is composed of 45 different subunits.

The protein resides in the mitochondrion inner membrane. It catalyses the reaction a ubiquinone + NADH + 5 H(+)(in) = a ubiquinol + NAD(+) + 4 H(+)(out). Core subunit of the mitochondrial membrane respiratory chain NADH dehydrogenase (Complex I) which catalyzes electron transfer from NADH through the respiratory chain, using ubiquinone as an electron acceptor. Part of the enzyme membrane arm which is embedded in the lipid bilayer and involved in proton translocation. The polypeptide is NADH-ubiquinone oxidoreductase chain 4L (MT-ND4L) (Taxidea taxus (American badger)).